A 283-amino-acid polypeptide reads, in one-letter code: Phosphatidylglycerol--prolipoprotein diacylglyceryl transferase (283 aa).

Helical transmembrane passes span 17-37, 56-76, 92-112, and 117-137; these read LAVR…TFLG, FLTW…VLFY, WEGG…IWLF, and GIGF…GLAS. Arg-139 contributes to the a 1,2-diacyl-sn-glycero-3-phospho-(1'-sn-glycerol) binding site. Helical transmembrane passes span 194-214, 222-242, and 255-275; these read PSQL…VWLF, GQVA…AEFA, and GLSM…VGFV.

It belongs to the Lgt family.

It is found in the cell inner membrane. It catalyses the reaction L-cysteinyl-[prolipoprotein] + a 1,2-diacyl-sn-glycero-3-phospho-(1'-sn-glycerol) = an S-1,2-diacyl-sn-glyceryl-L-cysteinyl-[prolipoprotein] + sn-glycerol 1-phosphate + H(+). It functions in the pathway protein modification; lipoprotein biosynthesis (diacylglyceryl transfer). In terms of biological role, catalyzes the transfer of the diacylglyceryl group from phosphatidylglycerol to the sulfhydryl group of the N-terminal cysteine of a prolipoprotein, the first step in the formation of mature lipoproteins. This is Phosphatidylglycerol--prolipoprotein diacylglyceryl transferase from Neisseria meningitidis serogroup C (strain 053442).